The chain runs to 188 residues: C-type lectin domain family 5 member A (188 aa).

Over 1 to 4 (MNWH) the chain is Cytoplasmic. A helical; Signal-anchor for type II membrane protein transmembrane segment spans residues 5–27 (MIISGLIVVVLKVVGMTLFLLYF). The Extracellular segment spans residues 28–188 (PQIFNKSNDG…YRRICEKNAK (161 aa)). N-linked (GlcNAc...) asparagine glycosylation occurs at Asn32. Cys71 and Cys82 form a disulfide bridge. The 107-residue stretch at 78–184 (YQARCFFLST…CDISYRRICE (107 aa)) folds into the C-type lectin domain. N-linked (GlcNAc...) asparagine glycans are attached at residues Asn93, Asn144, and Asn151. Disulfide bonds link Cys99–Cys183 and Cys161–Cys175.

Monomer. Homodimer. The majority of CLEC5A is expressed as a monomeric form on macrophages. Interacts with TYROBP/DAP12. The interaction with TYROBP is required for CLEC5A cell surface expression. Interacts with HCST/DAP10. Forms a CLEC5A/TYROBP/HCST trimolecular complex depending almost solely on TYROBP. In terms of assembly, (Microbial infection) Interacts with dengue virus envelope protein E. Post-translationally, N-glycosylated. Contains sialic acid residues. In terms of tissue distribution, highly expressed in bone marrow with lower levels in synovium, lung and bronchus. Expressed in peripheral blood monocytes and in the monocyte/macrophage cell lines U-937 and Mono-Mac-6, but not in cell lines of other origins. Expression is down-regulated when monocytes differentiate into dendritic cells.

It localises to the cell membrane. Its function is as follows. Functions as a positive regulator of osteoclastogenesis. Cell surface receptor that signals via TYROBP. Regulates inflammatory responses. (Microbial infection) Critical macrophage receptor for dengue virus serotypes 1-4. The binding of dengue virus to CLEC5A triggers signaling through the phosphorylation of TYROBP. This interaction does not result in viral entry, but stimulates pro-inflammatory cytokine release. In Homo sapiens (Human), this protein is C-type lectin domain family 5 member A (CLEC5A).